Consider the following 138-residue polypeptide: Ergosterol biosynthetic protein 28 (138 aa).

Residues 17–33 (LPYWLLFISVVSIFNSV) form a helical membrane-spanning segment. A glycan (N-linked (GlcNAc...) asparagine) is linked at Asn40. The next 3 membrane-spanning stretches (helical) occupy residues 56–75 (LSAR…RFYG), 87–107 (LTQF…LYFG), and 114–131 (GLSG…WMYL).

Belongs to the ERG28 family. In terms of assembly, heterotetramer of ERG25, ERG26, ERG27 and ERG28. ERG28 acts as a scaffold to tether ERG27 and other 4,4-demethylation-related enzymes, forming a demethylation enzyme complex, in the endoplasmic reticulum. Interacts with ERG25, ERG26 and ERG27. Also interacts with ERG1, ERG3, ERG5, ERG6 and ERG11.

The protein resides in the endoplasmic reticulum membrane. Functionally, part of the third module of ergosterol biosynthesis pathway that includes the late steps of the pathway. ERG28 has a role as a scaffold to help anchor the catalytic components of the C-4 demethylation complex ERG25, ERG26 and ERG27 to the endoplasmic reticulum. The third module or late pathway involves the ergosterol synthesis itself through consecutive reactions that mainly occur in the endoplasmic reticulum (ER) membrane. Firstly, the squalene synthase ERG9 catalyzes the condensation of 2 farnesyl pyrophosphate moieties to form squalene, which is the precursor of all steroids. Squalene synthase is crucial for balancing the incorporation of farnesyl diphosphate (FPP) into sterol and nonsterol isoprene synthesis. Secondly, the squalene epoxidase ERG1 catalyzes the stereospecific oxidation of squalene to (S)-2,3-epoxysqualene, which is considered to be a rate-limiting enzyme in steroid biosynthesis. Then, the lanosterol synthase ERG7 catalyzes the cyclization of (S)-2,3 oxidosqualene to lanosterol, a reaction that forms the sterol core. In the next steps, lanosterol is transformed to zymosterol through a complex process involving various demethylation, reduction and desaturation reactions. The lanosterol 14-alpha-demethylase ERG11 (also known as CYP51) catalyzes C14-demethylation of lanosterol to produce 4,4'-dimethyl cholesta-8,14,24-triene-3-beta-ol, which is critical for ergosterol biosynthesis. The C-14 reductase ERG24 reduces the C14=C15 double bond of 4,4-dimethyl-cholesta-8,14,24-trienol to produce 4,4-dimethyl-cholesta-8,24-dienol. 4,4-dimethyl-cholesta-8,24-dienol is substrate of the C-4 demethylation complex ERG25-ERG26-ERG27 in which ERG25 catalyzes the three-step monooxygenation required for the demethylation of 4,4-dimethyl and 4alpha-methylsterols, ERG26 catalyzes the oxidative decarboxylation that results in a reduction of the 3-beta-hydroxy group at the C-3 carbon to an oxo group, and ERG27 is responsible for the reduction of the keto group on the C-3. ERG28 has a role as a scaffold to help anchor ERG25, ERG26 and ERG27 to the endoplasmic reticulum and ERG29 regulates the activity of the iron-containing C4-methylsterol oxidase ERG25. Then, the sterol 24-C-methyltransferase ERG6 catalyzes the methyl transfer from S-adenosyl-methionine to the C-24 of zymosterol to form fecosterol. The C-8 sterol isomerase ERG2 catalyzes the reaction which results in unsaturation at C-7 in the B ring of sterols and thus converts fecosterol to episterol. The sterol-C5-desaturase ERG3 then catalyzes the introduction of a C-5 double bond in the B ring to produce 5-dehydroepisterol. The C-22 sterol desaturase ERG5 further converts 5-dehydroepisterol into ergosta-5,7,22,24(28)-tetraen-3beta-ol by forming the C-22(23) double bond in the sterol side chain. Finally, ergosta-5,7,22,24(28)-tetraen-3beta-ol is substrate of the C-24(28) sterol reductase ERG4 to produce ergosterol. This Candida albicans (strain SC5314 / ATCC MYA-2876) (Yeast) protein is Ergosterol biosynthetic protein 28.